The primary structure comprises 352 residues: Ion-translocating oxidoreductase complex subunit D (352 aa).

4 helical membrane passes run 20-40 (IMLL…WFFG), 42-62 (GTLV…ALVL), 89-109 (IPPL…VIIA), and 123-143 (PAMI…TSWL). Threonine 187 bears the FMN phosphoryl threonine mark. The next 5 membrane-spanning stretches (helical) occupy residues 214–234 (ILAG…GVWL), 242–262 (WHVP…GWLF), 267–287 (LAAP…FFIL), 301–321 (LIFG…GGYP), and 322–342 (DGVA…DYYT).

This sequence belongs to the NqrB/RnfD family. The complex is composed of six subunits: RsxA, RsxB, RsxC, RsxD, RsxE and RsxG. Requires FMN as cofactor.

It localises to the cell inner membrane. Part of a membrane-bound complex that couples electron transfer with translocation of ions across the membrane. Required to maintain the reduced state of SoxR. The sequence is that of Ion-translocating oxidoreductase complex subunit D from Escherichia coli (strain UTI89 / UPEC).